The chain runs to 592 residues: MIFVLTLVALCTAIHCPDGEVEVDGACYPSSCVFEDTVCNNHGTCTASVCRCDSGYSLGNQGCYPSICYLASDDVCNGHGKCVESEHGSYECSCDQGYINDYQVCVPEACYTEEGVCFGYGTCIQPTDGSAPYCRCYPANAGEKCTECSSEAVLIDGACVHKSCLTEFVPGETLVCNGLGRCMIMPFPNIHYVCSCYPYDGTFYNNTCIYNGCITEYNLYGITEVCSDRGICAGTRCVCDSGYNGPTCEYKVVDCEPGFVSAQETCYPEACISDESVCGGHGRCIWNNDGAACACNDGFVFYENTCIYASCIVNGIVCPHGTYDASMNPPRCICPTDYIGRNSVCYPSSCVTNSQTNPPQLCHSAGSCDFDTGVCSCNPTNSGPTCEECSSEATLIDGVCQPWSCIDERNPDALSVCSGKGTCIAYSGRDVFDVCYMCSCDSGYETVPGGICVPNSCVTASLIICSNRGTCTDGVCKCNEGYSGALCEWYQCPTGQTFVNNLCVHEECVTSYDDVAQTTSVCGGYGRCVEDDGSYKCSCRSDAKVIDGECVNESCITNSATNEVCSGHGKCNGYNCVCSVGYFGKHCNVKTL.

Residues 1–19 (MIFVLTLVALCTAIHCPDG) form the signal peptide. 6 EGF-like domains span residues 64–104 (YPSI…DYQV), 106–146 (VPEA…EKCT), 267–307 (YPEA…NTCI), 353–387 (NSQT…PTCE), 453–488 (VPNS…ALCE), and 546–588 (IDGE…KHCN). Disulfide bonds link cysteine 68–cysteine 82, cysteine 76–cysteine 92, cysteine 110–cysteine 123, cysteine 117–cysteine 134, cysteine 136–cysteine 145, cysteine 271–cysteine 284, cysteine 278–cysteine 293, cysteine 295–cysteine 306, cysteine 362–cysteine 375, cysteine 377–cysteine 386, cysteine 457–cysteine 471, cysteine 478–cysteine 487, cysteine 550–cysteine 565, cysteine 555–cysteine 576, and cysteine 578–cysteine 587. Residue asparagine 552 is glycosylated (N-linked (GlcNAc...) asparagine).

Belongs to the NOTCH family. Interacts with EB1.

The protein localises to the cell projection. The protein resides in the cilium. It localises to the flagellum. It is found in the cytoplasm. Its subcellular location is the cytoskeleton. The protein localises to the flagellum axoneme. This is Neurogenic locus notch homolog protein from Giardia intestinalis (strain ATCC 50803 / WB clone C6) (Giardia lamblia).